Consider the following 804-residue polypeptide: Angiotensin-converting enzyme 2 (804 aa).

The first 17 residues, 1–17 (MTGSFWLLLSLVAVTAA), serve as a signal peptide directing secretion. Topologically, residues 18–739 (QSTTEEQAKT…LGPPYEPPVT (722 aa)) are extracellular. The Peptidase M2 domain maps to 19-606 (STTEEQAKTF…QNRNSFVGWS (588 aa)). N-linked (GlcNAc...) asparagine glycans are attached at residues asparagine 53 and asparagine 90. Residue arginine 168 participates in chloride binding. Arginine 272 serves as a coordination point for substrate. An N-linked (GlcNAc...) asparagine glycan is attached at asparagine 298. Cysteine 343 and cysteine 360 are joined by a disulfide. 344–345 (HP) serves as a coordination point for substrate. Histidine 373 contacts Zn(2+). Glutamate 374 acts as the Proton acceptor in catalysis. Positions 377 and 401 each coordinate Zn(2+). Asparagine 431 carries an N-linked (GlcNAc...) asparagine glycan. Chloride is bound by residues tryptophan 476 and lysine 480. Histidine 504 (proton donor) is an active-site residue. Tyrosine 514 contacts substrate. Residues cysteine 529 and cysteine 541 are joined by a disulfide bond. Asparagine 545 carries N-linked (GlcNAc...) asparagine glycosylation. The Collectrin-like domain maps to 613-804 (SDQSIKVRIS…QNIDDVQTSL (192 aa)). Residues 651–658 (RKYFSEAR) form an essential for cleavage by ADAM17 region. N-linked (GlcNAc...) asparagine glycans are attached at residues asparagine 659 and asparagine 689. The essential for cleavage by TMPRSS11D and TMPRSS2 stretch occupies residues 696–715 (RTEVENAIRLSRDRINDVFQ). Residues 740–760 (IWLIIFGVVMGVVVIGIVVLI) form a helical membrane-spanning segment. The Cytoplasmic portion of the chain corresponds to 761 to 804 (FTGIRNRRKKNQASSEENPYGSVDLNKGENNSGFQNIDDVQTSL). The disordered stretch occupies residues 771 to 804 (NQASSEENPYGSVDLNKGENNSGFQNIDDVQTSL). Residues 777–785 (ENPYGSVDL) carry the LIR motif. Tyrosine 780 is modified (phosphotyrosine). The Endocytic sorting signal motif lies at 780-783 (YGSV). Residues 780 to 784 (YGSVD) carry the SH2-binding motif. A Phosphoserine modification is found at serine 782. A Glycyl lysine isopeptide (Lys-Gly) (interchain with G-Cter in ubiquitin) cross-link involves residue lysine 787. The span at 788–804 (GENNSGFQNIDDVQTSL) shows a compositional bias: polar residues. The short motif at 791–794 (NSGF) is the PTB element. A PDZ-binding motif is present at residues 802–804 (TSL).

Belongs to the peptidase M2 family. As to quaternary structure, homodimer. Interacts with the catalytically active form of TMPRSS2. Interacts with SLC6A19; this interaction is essential for expression and function of SLC6A19 in intestine. Interacts with ITGA5:ITGB1. Probably interacts (via endocytic sorting signal motif) with AP2M1; the interaction is inhibited by phosphorylation of Tyr-780. Interacts (via PDZ-binding motif) with NHERF1 (via PDZ domains); the interaction may enhance ACE2 membrane residence. It depends on Zn(2+) as a cofactor. Chloride serves as cofactor. In terms of processing, proteolytic cleavage by ADAM17 generates a secreted form. Also cleaved by serine proteases: TMPRSS2, TMPRSS11D and HPN/TMPRSS1. Post-translationally, phosphorylated. Phosphorylation at Tyr-780 probably inhibits interaction with AP2M1 and enables interactions with proteins containing SH2 domains. Ubiquitinated. Ubiquitinated on Lys-787 via 'Lys-48'-linked ubiquitin. 'Lys-48'-linked deubiquitinated by USP50 on the Lys-787; leading to its stabilization.

It localises to the secreted. The protein localises to the cell membrane. It is found in the cytoplasm. Its subcellular location is the cell projection. The protein resides in the cilium. It localises to the apical cell membrane. The catalysed reaction is angiotensin II + H2O = angiotensin-(1-7) + L-phenylalanine. The enzyme catalyses angiotensin I + H2O = angiotensin-(1-9) + L-leucine. It carries out the reaction bradykinin(1-8) + H2O = bradykinin(1-7) + L-phenylalanine. It catalyses the reaction neurotensin + H2O = neurotensin-(1-12) + L-leucine. The catalysed reaction is kinetensin + H2O = kinetensin-(1-8) + L-leucine. The enzyme catalyses dynorphin A-(1-13) + H2O = dynorphin A-(1-12) + L-lysine. It carries out the reaction apelin-13 + H2O = apelin-12 + L-phenylalanine. It catalyses the reaction [Pyr1]apelin-13 + H2O = [Pyr1]apelin-12 + L-phenylalanine. The catalysed reaction is apelin-17 + H2O = apelin-16 + L-phenylalanine. Functionally, essential counter-regulatory carboxypeptidase of the renin-angiotensin hormone system that is a critical regulator of blood volume, systemic vascular resistance, and thus cardiovascular homeostasis. Converts angiotensin I to angiotensin 1-9, a nine-amino acid peptide with anti-hypertrophic effects in cardiomyocytes, and angiotensin II to angiotensin 1-7, which then acts as a beneficial vasodilator and anti-proliferation agent, counterbalancing the actions of the vasoconstrictor angiotensin II. Also removes the C-terminal residue from three other vasoactive peptides, neurotensin, kinetensin, and des-Arg bradykinin, but is not active on bradykinin. Also cleaves other biological peptides, such as apelins, casomorphins and dynorphin A. Plays an important role in amino acid transport by acting as binding partner of amino acid transporter SLC6A19 in intestine, regulating trafficking, expression on the cell surface, and its catalytic activity. In Bos taurus (Bovine), this protein is Angiotensin-converting enzyme 2 (ACE2).